The chain runs to 1300 residues: Serine protease EspP (1300 aa).

Positions 1-55 (MNKIYSLKYSHITGGLIAVSELSGRVSSRATGKKKHKRILALCFLGLLQSSYSFA) are cleaved as a signal peptide. The Peptidase S6 domain occupies 57 to 311 (QMDISNFYIR…NQTTIDNLKN (255 aa)). Residues His127, Asp156, and Ser263 each act as charge relay system in the active site. The Autotransporter domain maps to 1034–1300 (DINGEAGAWA…AVNANFRYSF (267 aa)).

Post-translationally, cleaved to release the mature protein from the outer membrane.

The protein resides in the periplasm. It localises to the secreted. The protein localises to the cell surface. It is found in the cell outer membrane. Its activity is regulated as follows. Inhibition of cytotoxic activity by phenylmethylsulfonyl fluoride. In terms of biological role, serine protease capable of cleaving pepsin A and human coagulation factor V, which may contribute to the mucosal hemorrhage observed in hemorrhagic colitis. This is Serine protease EspP (espP) from Escherichia coli O157:H7.